The following is a 209-amino-acid chain: Orotate phosphoribosyltransferase (209 aa).

5-phospho-alpha-D-ribose 1-diphosphate is bound by residues Arg-96, Lys-100, His-102, and 122-130 (EDLISTGGS). Ser-126 serves as a coordination point for orotate.

Belongs to the purine/pyrimidine phosphoribosyltransferase family. PyrE subfamily. Homodimer. It depends on Mg(2+) as a cofactor.

The catalysed reaction is orotidine 5'-phosphate + diphosphate = orotate + 5-phospho-alpha-D-ribose 1-diphosphate. The protein operates within pyrimidine metabolism; UMP biosynthesis via de novo pathway; UMP from orotate: step 1/2. In terms of biological role, catalyzes the transfer of a ribosyl phosphate group from 5-phosphoribose 1-diphosphate to orotate, leading to the formation of orotidine monophosphate (OMP). This Listeria monocytogenes serovar 1/2a (strain ATCC BAA-679 / EGD-e) protein is Orotate phosphoribosyltransferase.